The primary structure comprises 425 residues: Histidine--tRNA ligase (425 aa).

The protein belongs to the class-II aminoacyl-tRNA synthetase family. In terms of assembly, homodimer.

Its subcellular location is the cytoplasm. The enzyme catalyses tRNA(His) + L-histidine + ATP = L-histidyl-tRNA(His) + AMP + diphosphate + H(+). This chain is Histidine--tRNA ligase, found in Pelotomaculum thermopropionicum (strain DSM 13744 / JCM 10971 / SI).